The primary structure comprises 143 residues: Large ribosomal subunit protein uL16 (143 aa).

This sequence belongs to the universal ribosomal protein uL16 family. Part of the 50S ribosomal subunit.

Its function is as follows. Binds 23S rRNA and is also seen to make contacts with the A and possibly P site tRNAs. The protein is Large ribosomal subunit protein uL16 of Oenococcus oeni (strain ATCC BAA-331 / PSU-1).